A 205-amino-acid chain; its full sequence is Urease accessory protein UreG (205 aa).

Residue 10–17 (GPVGAGKT) coordinates GTP.

It belongs to the SIMIBI class G3E GTPase family. UreG subfamily. As to quaternary structure, homodimer. UreD, UreF and UreG form a complex that acts as a GTP-hydrolysis-dependent molecular chaperone, activating the urease apoprotein by helping to assemble the nickel containing metallocenter of UreC. The UreE protein probably delivers the nickel.

The protein resides in the cytoplasm. Its function is as follows. Facilitates the functional incorporation of the urease nickel metallocenter. This process requires GTP hydrolysis, probably effectuated by UreG. The chain is Urease accessory protein UreG from Corynebacterium glutamicum (strain R).